The primary structure comprises 347 residues: Pre-B-cell leukemia transcription factor 1 (347 aa).

The segment at 1–40 is disordered; it reads MDDQPRLMHSHPGVGMAGHPSLSQHMQDGTGANEGEGGRK. Residues 38-232 enclose the PBC domain; it reads GRKQDIGDIL…VMILRSRFLD (195 aa). The tract at residues 45–124 is PBC-A; the sequence is DILQQIMTIT…EGVAGPEKGG (80 aa). Residues 127–232 are PBC-B; the sequence is AAAAAAAAAS…VMILRSRFLD (106 aa). The homeobox; TALE-type DNA-binding region spans 233–295; the sequence is ARRKRRNFNK…NKRIRYKKNI (63 aa). Positions 318–331 are enriched in polar residues; the sequence is VHGSQANSPSTPSS. Residues 318-347 form a disordered region; that stretch reads VHGSQANSPSTPSSAGGYPSPCYQSDRRIQ.

Belongs to the TALE/PBX homeobox family. As to quaternary structure, forms a heterodimer with meis1; the interaction is necessary for neural fate induction.

It is found in the nucleus. Its function is as follows. Acts as a transcriptional activator in complex with isoform 2 of meis1, to induce posterior neural and neural crest gene expression, and thereby specify hindbrain and neural crest cell fate. Binds to a highly conserved region in the promoter of the neural crest gene zic3. Required for the nuclear transport or retention of meis1. This chain is Pre-B-cell leukemia transcription factor 1, found in Xenopus tropicalis (Western clawed frog).